The primary structure comprises 276 residues: 2,3,4,5-tetrahydropyridine-2,6-dicarboxylate N-succinyltransferase (276 aa).

The substrate site is built by R107 and D144.

It belongs to the transferase hexapeptide repeat family. As to quaternary structure, homotrimer.

The protein resides in the cytoplasm. The catalysed reaction is (S)-2,3,4,5-tetrahydrodipicolinate + succinyl-CoA + H2O = (S)-2-succinylamino-6-oxoheptanedioate + CoA. Its pathway is amino-acid biosynthesis; L-lysine biosynthesis via DAP pathway; LL-2,6-diaminopimelate from (S)-tetrahydrodipicolinate (succinylase route): step 1/3. The sequence is that of 2,3,4,5-tetrahydropyridine-2,6-dicarboxylate N-succinyltransferase from Gluconobacter oxydans (strain 621H) (Gluconobacter suboxydans).